The sequence spans 162 residues: Caveolin-2 (162 aa).

The Cytoplasmic segment spans residues 1–86; it reads MGLETEKADV…FEISKYIIYK (86 aa). The residue at position 19 (tyrosine 19) is a Phosphotyrosine; by SRC. Residues serine 20 and serine 23 each carry the phosphoserine modification. The residue at position 27 (tyrosine 27) is a Phosphotyrosine; by SRC. The segment at residues 87 to 107 is an intramembrane region (helical); sequence FLTVFLAIPLAFAAGILFATL. Over 108 to 162 the chain is Cytoplasmic; sequence SCLHIWITMPFVKTCLMVLPSVQTIWKSVTDVAIAPLCTSVGRSFSSVSLQLSHD.

This sequence belongs to the caveolin family. Monomer or homodimer. Interacts with CAV1; the interaction forms a stable heterooligomeric complex that is required for targeting to lipid rafts and for caveolae formation. Tyrosine phosphorylated forms do not form heterooligomers with the Tyr-19-phosphorylated form existing as a monomer or dimer, and the Tyr-27-form as a monomer only. Interacts (tyrosine phosphorylated form) with the SH2 domain-containing proteins, RASA1, NCK1 and SRC. Interacts (tyrosine phosphorylated form) with INSR, the interaction (Tyr-27-phosphorylated form) is increased on insulin stimulation. Interacts (Tyr-19 phosphorylated form) with MAPK1 (phosphorylated form); the interaction, promoted by insulin, leads to nuclear location and MAPK1 activation. Interacts with STAT3; the interaction is increased on insulin-induced tyrosine phosphorylation leading to STAT activation. Phosphorylated on serine and tyrosine residues. CAV1 promotes phosphorylation on Ser-23 which then targets the complex to the plasma membrane, lipid rafts and caveolae. Phosphorylation on both Tyr-19 and Tyr-27 is required for insulin-induced 'Ser-727' phosphorylation of STAT3 and its activation. Phosphorylation on Tyr-19 is required for insulin-induced phosphorylation of MAPK1 and DNA binding of STAT3. Tyrosine phosphorylation is induced by both EGF and insulin.

It is found in the nucleus. The protein localises to the cytoplasm. Its subcellular location is the golgi apparatus membrane. It localises to the cell membrane. The protein resides in the membrane. It is found in the caveola. In terms of biological role, may act as a scaffolding protein within caveolar membranes. Interacts directly with G-protein alpha subunits and can functionally regulate their activity. Acts as an accessory protein in conjunction with CAV1 in targeting to lipid rafts and driving caveolae formation. Positive regulator of cellular mitogenesis of the MAPK signaling pathway. Required for the insulin-stimulated nuclear translocation and activation of MAPK1 and STAT3, and the subsequent regulation of cell cycle progression. The protein is Caveolin-2 (CAV2) of Dasypus novemcinctus (Nine-banded armadillo).